The sequence spans 1197 residues: SRC kinase signaling inhibitor 1 (1197 aa).

Residues 19-45 (AEGRARSPREEVGPRDPGGRGEPDPER) are compositionally biased toward basic and acidic residues. Residues 19 to 80 (AEGRARSPRE…GGSGGRRFSN (62 aa)) are disordered. Phosphoserine occurs at positions 47 and 52. The segment covering 65–75 (LGGGGSGGSGG) has biased composition (gly residues). At Ser-79 the chain carries Phosphoserine. Thr-86 carries the phosphothreonine modification. Residues Ser-87, Ser-98, Ser-178, Ser-200, Ser-204, Ser-214, and Ser-260 each carry the phosphoserine modification. The residue at position 276 (Tyr-276) is a Phosphotyrosine. The tract at residues 319-415 (ASRESSPTRR…RRDVKPDEDL (97 aa)) is disordered. Polar residues predominate over residues 321-331 (RESSPTRRLNN). Residues 332–341 (LSPASHLASS) are compositionally biased toward low complexity. A phosphoserine mark is found at Ser-333, Ser-342, and Ser-359. Positions 348–366 (PSGLPSGLPSGSPSRSRLS) are enriched in low complexity. Residues Arg-364 and Arg-371 each carry the omega-N-methylarginine modification. Phosphoserine is present on residues Ser-378, Ser-397, and Ser-399. The segment covering 391–400 (PTSQGVSPSP) has biased composition (polar residues). A compositionally biased stretch (basic and acidic residues) spans 404 to 415 (LERRDVKPDEDL). Position 431 is a phosphotyrosine (Tyr-431). Residues 501 to 676 (GFRLPPSSPQ…AVSSTPAGQP (176 aa)) form a disordered region. Over residues 520–531 (GGPPPPHSPYSG) the composition is skewed to pro residues. Ser-527, Ser-530, and Ser-534 each carry phosphoserine. Arg-535 is subject to Omega-N-methylarginine. Phosphoserine occurs at positions 537, 547, 549, 551, and 556. Over residues 595 to 607 (KDTETRERMEAME) the composition is skewed to basic and acidic residues. Ser-631 and Ser-655 each carry phosphoserine. A phosphothreonine mark is found at Thr-658 and Thr-671. An interaction with SNAP25 region spans residues 681–731 (RLQMQMHLRGLQNSASDLRGQLQQLRKLQLQNQESVRALLKRTEAELSMRV). Coiled coils occupy residues 688–708 (LRGLQNSASDLRGQLQQLRKL) and 760–780 (EELITQQLNDLEKSVEKIQRD). Residues Ser-878 and Ser-900 each carry the phosphoserine modification. Disordered regions lie at residues 891 to 949 (GLDF…ERDW) and 983 to 1065 (DCAS…VVTS). Thr-918 carries the post-translational modification Phosphothreonine. Ser-1021 is subject to Phosphoserine. Residues 1036-1045 (KSPPPPPPRR) show a composition bias toward pro residues. Ser-1077 and Ser-1094 each carry phosphoserine. A disordered region spans residues 1141 to 1163 (SRLKAAQGPAGSPDKGKHGKQRT).

The protein belongs to the SRCIN1 family. Interacts with BCAR1/p130Cas through its C-terminal domain and with CSK, CTTN and SRC. Also interacts with MAPRE3/EB3, SORBS3/vinexin and the N-terminal coiled-coil region of SNAP25. Tyrosine-phosphorylated in response to EGF and to cell adhesion to integrin ligands. Expressed exclusively in brain. Abundant in telencephalon and expressed moderately in cerebellum, hypothalamus, thalamus, superior and inferior colliculi, and olfactory bulb. No expression detected in medulla oblongata, spinal cord or pituitary gland. Enriched in the neuropil rather than soma in the thalamus, corpus striatum and cerebral cortex. Detected in astrocytes.

It is found in the cytoplasm. It localises to the cytoskeleton. The protein localises to the cell projection. Its subcellular location is the axon. The protein resides in the dendrite. It is found in the presynapse. It localises to the postsynapse. The protein localises to the postsynaptic density. In terms of biological role, acts as a negative regulator of SRC by activating CSK which inhibits SRC activity and downstream signaling, leading to impaired cell spreading and migration. Regulates dendritic spine morphology. Involved in calcium-dependent exocytosis. May play a role in neurotransmitter release or synapse maintenance. The sequence is that of SRC kinase signaling inhibitor 1 from Rattus norvegicus (Rat).